The following is a 443-amino-acid chain: Proline--tRNA ligase (443 aa).

The protein belongs to the class-II aminoacyl-tRNA synthetase family. ProS type 2 subfamily. As to quaternary structure, homodimer.

Its subcellular location is the cytoplasm. It carries out the reaction tRNA(Pro) + L-proline + ATP = L-prolyl-tRNA(Pro) + AMP + diphosphate. Catalyzes the attachment of proline to tRNA(Pro) in a two-step reaction: proline is first activated by ATP to form Pro-AMP and then transferred to the acceptor end of tRNA(Pro). In Zymomonas mobilis subsp. mobilis (strain ATCC 31821 / ZM4 / CP4), this protein is Proline--tRNA ligase.